The sequence spans 153 residues: Ribosome maturation factor RimP (153 aa).

It belongs to the RimP family.

It localises to the cytoplasm. Functionally, required for maturation of 30S ribosomal subunits. The polypeptide is Ribosome maturation factor RimP (Acidithiobacillus ferrooxidans (strain ATCC 53993 / BNL-5-31) (Leptospirillum ferrooxidans (ATCC 53993))).